Reading from the N-terminus, the 778-residue chain is Subtilisin-like protease SBT3.6 (778 aa).

An N-terminal signal peptide occupies residues 1 to 22 (MMNYRTSIYVVLSLVIFLNVQR). Residues 23 to 113 (SFVAESSAKR…VIPDSFYKLA (91 aa)) constitute a propeptide, activation peptide. The 80-residue stretch at 34-113 (VHIVYLGEKQ…VIPDSFYKLA (80 aa)) folds into the Inhibitor I9 domain. A glycan (N-linked (GlcNAc...) asparagine) is linked at Asn-69. The 509-residue stretch at 117 to 625 (TWDYLGLSAA…GGLVNPEKSA (509 aa)) folds into the Peptidase S8 domain. Residue Asp-147 is the Charge relay system of the active site. Residues Asn-158, Asn-180, Asn-202, and Asn-206 are each glycosylated (N-linked (GlcNAc...) asparagine). His-222 acts as the Charge relay system in catalysis. N-linked (GlcNAc...) asparagine glycans are attached at residues Asn-237, Asn-399, Asn-414, and Asn-541. One can recognise a PA domain in the interval 388–483 (SLVYPENPGN…ELGTDILLYT (96 aa)). The Charge relay system role is filled by Ser-556. Residues Asn-648, Asn-724, and Asn-759 are each glycosylated (N-linked (GlcNAc...) asparagine).

The protein belongs to the peptidase S8 family.

The protein localises to the secreted. This Arabidopsis thaliana (Mouse-ear cress) protein is Subtilisin-like protease SBT3.6.